The following is a 95-amino-acid chain: uncharacterized protein (95 aa).

Residues 3 to 23 (FVIIIAILLLGISLILAFTVL) form a helical membrane-spanning segment.

Its subcellular location is the membrane. This is an uncharacterized protein from Methanocaldococcus jannaschii (strain ATCC 43067 / DSM 2661 / JAL-1 / JCM 10045 / NBRC 100440) (Methanococcus jannaschii).